The following is a 449-amino-acid chain: NADP-specific glutamate dehydrogenase (449 aa).

Lys-125 is a catalytic residue.

The protein belongs to the Glu/Leu/Phe/Val dehydrogenases family. Homohexamer.

It carries out the reaction L-glutamate + NADP(+) + H2O = 2-oxoglutarate + NH4(+) + NADPH + H(+). The polypeptide is NADP-specific glutamate dehydrogenase (Giardia intestinalis (Giardia lamblia)).